The following is a 272-amino-acid chain: tRNA pseudouridine synthase B (272 aa).

The Nucleophile role is filled by D38.

The protein belongs to the pseudouridine synthase TruB family. Type 1 subfamily.

It catalyses the reaction uridine(55) in tRNA = pseudouridine(55) in tRNA. Responsible for synthesis of pseudouridine from uracil-55 in the psi GC loop of transfer RNAs. The sequence is that of tRNA pseudouridine synthase B from Campylobacter jejuni subsp. jejuni serotype O:2 (strain ATCC 700819 / NCTC 11168).